Consider the following 60-residue polypeptide: Large ribosomal subunit protein uL30 (60 aa).

It belongs to the universal ribosomal protein uL30 family. As to quaternary structure, part of the 50S ribosomal subunit.

The sequence is that of Large ribosomal subunit protein uL30 from Oceanobacillus iheyensis (strain DSM 14371 / CIP 107618 / JCM 11309 / KCTC 3954 / HTE831).